A 398-amino-acid polypeptide reads, in one-letter code: MKKITILGSTGSIGINALSIIQKNPDLFKVIALVANKNFSIMLRQCELFSPDWVAMRDEKSAHILRKKLKHSKINTQVLTGEKDICALAALEETDHVISAIVGMAGLLPTLSAIHAGKTILLANKESLITSGYFFMKALSSSGAKIIPIDSEHNAIFQVLPLEIQKNLGKTTLEKNSIKHLVLTGSGGPFYKFSSSDLSNVTPDQACSHPNWLMGKKISVDSATMMNKGLEYAEARWLFNALESEIKILIHPESIIHSMVQYYDGSLLAQLSAPDIRTSISYAMSWPDRICTEVDYLNFYKINNLTFFEPDFTQFPCLKLAIDAFSQGQASMTVLNAANEIAVSSFLDSKISFTKIYEINMEILMSSCFSEPKCIQDILEIDRKVRILAKNKVSSLIF.

Residues threonine 10, glycine 11, serine 12, isoleucine 13, lysine 37, asparagine 38, and asparagine 124 each contribute to the NADPH site. Position 125 (lysine 125) interacts with 1-deoxy-D-xylulose 5-phosphate. Glutamate 126 contributes to the NADPH binding site. Residue aspartate 150 participates in Mn(2+) binding. Residues serine 151, glutamate 152, serine 186, and histidine 209 each coordinate 1-deoxy-D-xylulose 5-phosphate. Glutamate 152 is a Mn(2+) binding site. Glycine 215 contributes to the NADPH binding site. Positions 222, 227, 228, and 231 each coordinate 1-deoxy-D-xylulose 5-phosphate. Glutamate 231 provides a ligand contact to Mn(2+).

This sequence belongs to the DXR family. Homodimer. Mg(2+) serves as cofactor. The cofactor is Mn(2+).

The catalysed reaction is 2-C-methyl-D-erythritol 4-phosphate + NADP(+) = 1-deoxy-D-xylulose 5-phosphate + NADPH + H(+). Its pathway is isoprenoid biosynthesis; isopentenyl diphosphate biosynthesis via DXP pathway; isopentenyl diphosphate from 1-deoxy-D-xylulose 5-phosphate: step 1/6. In terms of biological role, catalyzes the NADPH-dependent rearrangement and reduction of 1-deoxy-D-xylulose-5-phosphate (DXP) to 2-C-methyl-D-erythritol 4-phosphate (MEP). This chain is 1-deoxy-D-xylulose 5-phosphate reductoisomerase, found in Buchnera aphidicola subsp. Acyrthosiphon pisum (strain 5A).